The chain runs to 2920 residues: Cadherin-related hmr-1 (2920 aa).

Residues 1 to 19 form the signal peptide; sequence MSWNILLILLISNLDEVLA. The Extracellular portion of the chain corresponds to 20–2779; sequence KTLLKLPSNA…AVSKLGISSP (2760 aa). Asparagine 72, asparagine 243, asparagine 253, asparagine 339, and asparagine 508 each carry an N-linked (GlcNAc...) asparagine glycan. 14 Cadherin domains span residues 322 to 422, 425 to 530, 531 to 642, 643 to 747, 749 to 865, 871 to 979, 980 to 1093, 1097 to 1211, 1212 to 1335, 1336 to 1436, 1438 to 1546, 1548 to 1661, 1662 to 1772, and 1772 to 1874; these read SSRS…PPSF, SPLP…PPQF, AKQE…VPTF, TRPL…SAVF, PTSQ…KPEF, YSDI…SPQF, ERPS…APKW, PDCK…VPQF, TVDL…APSF, EEQK…APQF, QQKY…SPIF, ERLF…APFF, EKTR…APHI, and IHGA…EPYT. Residues asparagine 658, asparagine 685, asparagine 715, and asparagine 826 are each glycosylated (N-linked (GlcNAc...) asparagine). N-linked (GlcNAc...) asparagine glycosylation occurs at asparagine 1177. N-linked (GlcNAc...) asparagine glycosylation occurs at asparagine 1417. Asparagine 1646 carries N-linked (GlcNAc...) asparagine glycosylation. N-linked (GlcNAc...) asparagine glycans are attached at residues asparagine 1935, asparagine 2224, and asparagine 2232. Positions 2246–2283 constitute an EGF-like 1 domain; sequence APPACQHSLCHNDGVCHNTNPGFFCECRNDGLKGARCQ. Disulfide bonds link cysteine 2250-cysteine 2261, cysteine 2255-cysteine 2270, and cysteine 2272-cysteine 2282. The Laminin G-like domain occupies 2284–2478; it reads GTTRSFGGNG…AFEQNSEKGC (195 aa). N-linked (GlcNAc...) asparagine glycans are attached at residues asparagine 2307 and asparagine 2332. Disulfide bonds link cysteine 2452/cysteine 2478, cysteine 2501/cysteine 2515, and cysteine 2517/cysteine 2526. One can recognise an EGF-like 2 domain in the interval 2492–2527; the sequence is SLNHCIHGDCFADVQGSGAMVAKCVCDPGWGGARCE. Asparagine 2623 is a glycosylation site (N-linked (GlcNAc...) asparagine). The helical transmembrane segment at 2780 to 2800 threads the bilayer; the sequence is AIILILVSLALLILLVMMMVV. The Cytoplasmic segment spans residues 2801–2920; that stretch reads YTRRSPGAFE…VTLESIESAQ (120 aa). Position 2839 is a phosphoserine (serine 2839). The interval 2858–2891 is disordered; sequence IGGHPPHYPPRGMAPPKDDHELNSKIKDLETDQN. A compositionally biased stretch (basic and acidic residues) spans 2873-2887; that stretch reads PKDDHELNSKIKDLE. Serine 2909 carries the post-translational modification Phosphoserine. Threonine 2912 bears the Phosphothreonine mark. Phosphoserine occurs at positions 2915 and 2918.

Monomer in solution. Isoform a is a component of a core catenin-cadherin complex consisting of hmr-1, hmp-1 and hmp-2; the complex localizes to adherens junctions. Isoform a interacts with hmp-2; the interaction is direct. Isoform a interacts (via intracellular domain) with jac-1. In terms of processing, phosphorylation at T-2912 increases the binding affinity for hmp-2. Post-translationally, sumoylated. Sumoylation prevents accumulation at adherens junctions and decreases the binding affinity for hmp-2. Expressed in epidermal cells (at protein level). In terms of tissue distribution, neuron-specific.

The protein localises to the cell membrane. Its subcellular location is the cell junction. It is found in the adherens junction. The protein resides in the cell projection. It localises to the dendrite. Cadherins are calcium-dependent cell adhesion proteins. They preferentially interact with themselves in a homophilic manner in connecting cells; cadherins may thus contribute to the sorting of heterogeneous cell types. Required for adherens junction assembly and connecting adherens junctions to the cytoskeleton. In terms of biological role, isoform a is required for cell migration during body enclosure and cell shape changes during body elongation. Required for proper localization of other junctional components, such as hmp-1, hmp-2, jac-1 and pac-1. Recruitment of pac-1 is required to establish cell polarity, independent of its role in cell adhesion. Required for primodial germ cell ingression and adherence to endodermal cells during gastrulation. Its function is as follows. Isoform b is involved in axonal guidance in a subset of motor neurons. This chain is Cadherin-related hmr-1, found in Caenorhabditis elegans.